Consider the following 520-residue polypeptide: Signal peptide peptidase-like 2A (520 aa).

Positions 1–25 (MGPQRRLSPAGAALLWGFLLQLTAA) are cleaved as a signal peptide. Topologically, residues 26–172 (QEAILHASGN…PSWPNFDYTM (147 aa)) are lumenal. N-linked (GlcNAc...) asparagine glycosylation is found at asparagine 58, asparagine 66, asparagine 74, asparagine 116, asparagine 126, and asparagine 149. The region spanning 63-151 (SLMNLTSTPL…YKDFRDMNQT (89 aa)) is the PA domain. N-linked (GlcNAc...) (complex) asparagine glycosylation occurs at asparagine 155. A helical transmembrane segment spans residues 173-193 (VVIFVIAVFTVALGGYWSGLV). Over 194–220 (ELENLKAVTTEDREMRKKKEEYLTFSP) the chain is Cytoplasmic. A helical membrane pass occupies residues 221–241 (LTVVIFVVICCVMMVLLYFFY). The Lumenal segment spans residues 242–247 (KWLVYV). Residues 248 to 268 (MIAIFCIASAMSLYNCLAALI) form a helical membrane-spanning segment. Topologically, residues 269–285 (HKIPYGQCTIACRGKNM) are cytoplasmic. The helical transmembrane segment at 286–306 (EVRLIFLSGLCIAVAVVWAVF) threads the bilayer. The Lumenal segment spans residues 307-311 (RNEDR). A helical transmembrane segment spans residues 312–332 (WAWILQDILGIAFCLNLIKTL). Over 333-340 (KLPNFKSC) the chain is Cytoplasmic. The helical transmembrane segment at 341-361 (VILLGLLLLYDVFFVFITPFI) threads the bilayer. The active site involves aspartate 351. The Lumenal portion of the chain corresponds to 362-399 (TKNGESIMVELAAGPFGNNEKLPVVIRVPKLIYFSVMS). A helical transmembrane segment spans residues 400–420 (VCLMPVSILGFGDIIVPGLLI). Residue aspartate 412 is part of the active site. Residues 421–437 (AYCRRFDVQTGSSYIYY) lie on the Cytoplasmic side of the membrane. A helical transmembrane segment spans residues 438–458 (VSSTVAYAIGMILTFVVLVLM). Over 459–460 (KK) the chain is Lumenal. Residues 461 to 481 (GQPALLYLVPCTLITASVVAW) traverse the membrane as a helical segment. A PAL motif is present at residues 463–465 (PAL). Residues 482–520 (RRKEMKKFWKGNSYQMMDHLDCATNEENPVISGEQIVQQ) lie on the Cytoplasmic side of the membrane. A YXXo lysosomal targeting motif motif is present at residues 495–498 (YQMM).

It belongs to the peptidase A22B family. As to quaternary structure, interacts with ITM2B. In terms of processing, glycosylated. As to expression, ubiquitous.

It localises to the late endosome membrane. Its subcellular location is the lysosome membrane. It is found in the membrane. Its function is as follows. Intramembrane-cleaving aspartic protease (I-CLiP) that cleaves type II membrane signal peptides in the hydrophobic plane of the membrane. Functions in FASLG, ITM2B and TNF processing. Catalyzes the intramembrane cleavage of the anchored fragment of shed TNF-alpha (TNF), which promotes the release of the intracellular domain (ICD) for signaling to the nucleus. Also responsible for the intramembrane cleavage of Fas antigen ligand FASLG, which promotes the release of the intracellular FasL domain (FasL ICD). Essential for degradation of the invariant chain CD74 that plays a central role in the function of antigen-presenting cells in the immune system. Plays a role in the regulation of innate and adaptive immunity. Catalyzes the intramembrane cleavage of the simian foamy virus envelope glycoprotein gp130 independently of prior ectodomain shedding by furin or furin-like proprotein convertase (PC)-mediated cleavage proteolysis. The polypeptide is Signal peptide peptidase-like 2A (Homo sapiens (Human)).